A 201-amino-acid chain; its full sequence is Recombination protein RecR (201 aa).

The segment at 57–72 adopts a C4-type zinc-finger fold; it reads CADCRTFTEQEICTIC. A Toprim domain is found at 81-176; the sequence is GLICVVESPA…DASRIAHGVP (96 aa).

It belongs to the RecR family.

In terms of biological role, may play a role in DNA repair. It seems to be involved in an RecBC-independent recombinational process of DNA repair. It may act with RecF and RecO. This chain is Recombination protein RecR, found in Erwinia tasmaniensis (strain DSM 17950 / CFBP 7177 / CIP 109463 / NCPPB 4357 / Et1/99).